Here is a 334-residue protein sequence, read N- to C-terminus: Heat-inducible transcription repressor HrcA (334 aa).

Belongs to the HrcA family.

Functionally, negative regulator of class I heat shock genes (grpE-dnaK-dnaJ and groELS operons). Prevents heat-shock induction of these operons. This is Heat-inducible transcription repressor HrcA from Bordetella bronchiseptica (strain ATCC BAA-588 / NCTC 13252 / RB50) (Alcaligenes bronchisepticus).